A 181-amino-acid chain; its full sequence is Ferritin heavy chain (181 aa).

Residues 10–159 (QNYHQDCEAA…DHVTNLRKMG (150 aa)) enclose the Ferritin-like diiron domain. The Fe cation site is built by Glu27, Glu62, His65, Glu107, and Gln141.

The protein belongs to the ferritin family. As to quaternary structure, oligomer of 24 subunits. There are two types of subunits: L (light) chain and H (heavy) chain. The major chain can be light or heavy, depending on the species and tissue type. The functional molecule forms a roughly spherical shell with a diameter of 12 nm and contains a central cavity into which the insoluble mineral iron core is deposited. In terms of tissue distribution, expressed in erythroblasts (at protein level). Expressed in heart, liver, spleen, lung, kidney, large intestine, small intestine, muscle, glandular stomach, ovary and oviduct.

Its subcellular location is the cytoplasm. It is found in the lysosome. It localises to the cytoplasmic vesicle. The protein resides in the autophagosome. The enzyme catalyses 4 Fe(2+) + O2 + 4 H(+) = 4 Fe(3+) + 2 H2O. Stores iron in a soluble, non-toxic, readily available form. Important for iron homeostasis. Has ferroxidase activity. Iron is taken up in the ferrous form and deposited as ferric hydroxides after oxidation. Also plays a role in delivery of iron to cells. Mediates iron uptake in capsule cells of the developing kidney. Delivery to lysosomes is mediated by the cargo receptor NCOA4 for autophagic degradation and release of iron. Functionally, inhibits translation of various mRNA species in vitro. Associates with a 35S prosome-like particle that contains non-translated mRNAs in a complex with proteins. May be involved in pre-translational regulation of some mRNA. In Anas platyrhynchos (Mallard), this protein is Ferritin heavy chain.